We begin with the raw amino-acid sequence, 461 residues long: V-type ATP synthase beta chain (461 aa).

Belongs to the ATPase alpha/beta chains family.

Produces ATP from ADP in the presence of a proton gradient across the membrane. The V-type beta chain is a regulatory subunit. The polypeptide is V-type ATP synthase beta chain (Streptococcus pneumoniae serotype 19F (strain G54)).